We begin with the raw amino-acid sequence, 114 residues long: Large ribosomal subunit protein eL31 (114 aa).

Belongs to the eukaryotic ribosomal protein eL31 family.

This Eremothecium gossypii (strain ATCC 10895 / CBS 109.51 / FGSC 9923 / NRRL Y-1056) (Yeast) protein is Large ribosomal subunit protein eL31 (RPL31).